The following is a 180-amino-acid chain: Inner membrane-spanning protein YciB (180 aa).

The next 5 membrane-spanning stretches (helical) occupy residues 22–42, 50–70, 76–96, 121–141, and 149–169; these read IYVA…LTWL, MTLI…VFHN, WKVT…QVVL, AAWA…AFWL, and FKVF…GIYI.

Belongs to the YciB family.

Its subcellular location is the cell inner membrane. In terms of biological role, plays a role in cell envelope biogenesis, maintenance of cell envelope integrity and membrane homeostasis. This Edwardsiella ictaluri (strain 93-146) protein is Inner membrane-spanning protein YciB.